A 79-amino-acid chain; its full sequence is Sec-independent protein translocase protein TatA (79 aa).

Residues 1–21 form a helical membrane-spanning segment; that stretch reads MGGFTSIWHWVIVLLVIVLLF. Residues 54–79 form a disordered region; that stretch reads ELKTLDAQATQTKVHETSEIKSKQES. A compositionally biased stretch (basic and acidic residues) spans 66–79; it reads KVHETSEIKSKQES.

This sequence belongs to the TatA/E family. As to quaternary structure, the Tat system comprises two distinct complexes: a TatABC complex, containing multiple copies of TatA, TatB and TatC subunits, and a separate TatA complex, containing only TatA subunits. Substrates initially bind to the TatABC complex, which probably triggers association of the separate TatA complex to form the active translocon.

Its subcellular location is the cell inner membrane. Its function is as follows. Part of the twin-arginine translocation (Tat) system that transports large folded proteins containing a characteristic twin-arginine motif in their signal peptide across membranes. TatA could form the protein-conducting channel of the Tat system. This is Sec-independent protein translocase protein TatA from Helicobacter pylori (strain J99 / ATCC 700824) (Campylobacter pylori J99).